The chain runs to 965 residues: Probable serine/threonine-protein kinase DDB_G0291516 (965 aa).

Residues 114 to 170 (KDSQKELLPSPQQLTPPTSLPSLPLLPLPQAPEQNEEQQLTQPPSPPSIPPPPPQKK) are disordered. 2 stretches are compositionally biased toward low complexity: residues 119–136 (ELLP…LPSL) and 144–155 (APEQNEEQQLTQ). The span at 156–168 (PPSPPSIPPPPPQ) shows a compositional bias: pro residues. ANK repeat units follow at residues 271-301 (KGET…HMGI) and 310-339 (LNKN…PLKM). The 281-residue stretch at 459-739 (IDFHTQIGSA…NVKAIKKEFL (281 aa)) folds into the Protein kinase domain. Residues 465–473 (IGSAGNASV) and lysine 486 contribute to the ATP site. Residue aspartate 587 is the Proton acceptor of the active site. A helical transmembrane segment spans residues 653–673 (IYSLGIILWELVCVAMTGTYI). N-linked (GlcNAc...) asparagine glycans are attached at residues asparagine 760, asparagine 765, asparagine 905, asparagine 909, asparagine 910, asparagine 914, asparagine 934, and asparagine 938. Low complexity predominate over residues 881–940 (NINKNKNNNNNNNNNNNNNNNINNNNTFNNSTNNNSNDNINIPYDFNNNNNNNNNSCNNS). A disordered region spans residues 881-942 (NINKNKNNNN…NNNSCNNSKK (62 aa)).

This sequence belongs to the protein kinase superfamily. Ser/Thr protein kinase family.

It localises to the membrane. The catalysed reaction is L-seryl-[protein] + ATP = O-phospho-L-seryl-[protein] + ADP + H(+). The enzyme catalyses L-threonyl-[protein] + ATP = O-phospho-L-threonyl-[protein] + ADP + H(+). The sequence is that of Probable serine/threonine-protein kinase DDB_G0291516 from Dictyostelium discoideum (Social amoeba).